We begin with the raw amino-acid sequence, 285 residues long: Bifunctional protein FolD (285 aa).

NADP(+) contacts are provided by residues 165-167, S190, and I231; that span reads GRS.

The protein belongs to the tetrahydrofolate dehydrogenase/cyclohydrolase family. In terms of assembly, homodimer.

The enzyme catalyses (6R)-5,10-methylene-5,6,7,8-tetrahydrofolate + NADP(+) = (6R)-5,10-methenyltetrahydrofolate + NADPH. It catalyses the reaction (6R)-5,10-methenyltetrahydrofolate + H2O = (6R)-10-formyltetrahydrofolate + H(+). It functions in the pathway one-carbon metabolism; tetrahydrofolate interconversion. In terms of biological role, catalyzes the oxidation of 5,10-methylenetetrahydrofolate to 5,10-methenyltetrahydrofolate and then the hydrolysis of 5,10-methenyltetrahydrofolate to 10-formyltetrahydrofolate. In Acetivibrio thermocellus (strain ATCC 27405 / DSM 1237 / JCM 9322 / NBRC 103400 / NCIMB 10682 / NRRL B-4536 / VPI 7372) (Clostridium thermocellum), this protein is Bifunctional protein FolD.